The following is an 86-amino-acid chain: Small ribosomal subunit protein uS17 (86 aa).

It belongs to the universal ribosomal protein uS17 family. As to quaternary structure, part of the 30S ribosomal subunit.

One of the primary rRNA binding proteins, it binds specifically to the 5'-end of 16S ribosomal RNA. This chain is Small ribosomal subunit protein uS17, found in Helicobacter pylori (strain P12).